Consider the following 545-residue polypeptide: Glucose-6-phosphate isomerase (545 aa).

The active-site Proton donor is glutamate 351. Residues histidine 382 and lysine 510 contribute to the active site.

This sequence belongs to the GPI family.

Its subcellular location is the cytoplasm. It catalyses the reaction alpha-D-glucose 6-phosphate = beta-D-fructose 6-phosphate. The protein operates within carbohydrate biosynthesis; gluconeogenesis. It functions in the pathway carbohydrate degradation; glycolysis; D-glyceraldehyde 3-phosphate and glycerone phosphate from D-glucose: step 2/4. Functionally, catalyzes the reversible isomerization of glucose-6-phosphate to fructose-6-phosphate. The chain is Glucose-6-phosphate isomerase from Shewanella sp. (strain MR-7).